Here is an 824-residue protein sequence, read N- to C-terminus: C-Jun-amino-terminal kinase-interacting protein 2 (824 aa).

Disordered stretches follow at residues 1–28 (MADR…QDIS), 40–160 (ITDD…GFDL), 172–349 (CSPA…DSPW), and 361–501 (EGSS…APRD). The segment covering 77–110 (DFQEFEMIDDNEEEDDEDEEEEEEEEEGDGEGQE) has biased composition (acidic residues). A JNK-binding domain (JBD) region spans residues 110 to 275 (EGGDPGSEAP…RMISSISETE (166 aa)). The span at 141–156 (LRLTTLGAQDSLNNNG) shows a compositional bias: polar residues. The tract at residues 239-498 (GRGGRRSSQE…PGGRGTGPSA (260 aa)) is necessary for interaction with FGF13. Phosphoserine is present on residues Ser254, Ser302, and Ser305. Residues 268–305 (ISSISETELELSSDGGSSSSGRSSHLTNSIEEASSPAS) are compositionally biased toward low complexity. Residues 327–346 (TNSEYESGSESEPDLSEDAD) show a composition bias toward acidic residues. A compositionally biased stretch (pro residues) spans 416–432 (APPPPAPAAPRPGPAQP). Low complexity predominate over residues 451 to 467 (AAPGRAARPGRACSAAC). Over residues 468–484 (SEEEDEEDDEEEEDAED) the composition is skewed to acidic residues. Residues 604–665 (EREQTHRAVF…PAFYAHAVPG (62 aa)) enclose the SH3 domain. Residues 677 to 813 (PCWVERFDVQ…FLEYYQEHLA (137 aa)) form the PID domain.

This sequence belongs to the JIP scaffold family. Forms homo- or heterooligomeric complexes. Binds specific components of the JNK signaling pathway namely JNK1, JNK2, JNK3, MAP2K7, MAP3K10, MAP3K11, MAP3K12 and MAPK13. Also binds the proline-rich domain-containing splice variant of apolipoprotein E receptor 2 (ApoER2). Binds the cytoplasmic tails of LRP1 and LRP2 (Megalin). Binds the TPR motif-containing C-terminal of kinesin light chain, Klc1, pre-assembled MAPK8IP1 scaffolding complexes are then transported as a cargo of kinesin, to the required subcellular location. Interacts with the cytoplasmic domain of APP. Interacts with DCLK2. Interacts with TIAM1 and TIAM2. Interacts with FGF13; enables the interaction with MAPK13 and may regulate the MAPK8IP2 scaffolding activity. Interacts with SH3RF2. In terms of tissue distribution, expressed mainly in the brain and pancreas, including insulin-secreting cells. In the nervous system, more abundantly expressed in the cerebellum, pituitary gland, occipital lobe and the amygdala. Also expressed in fetal brain. Very low levels found in uterus, ovary, prostate, colon, testis, adrenal gland, thyroid gland and salivary gland.

Its subcellular location is the cytoplasm. Its function is as follows. The JNK-interacting protein (JIP) group of scaffold proteins selectively mediates JNK signaling by aggregating specific components of the MAPK cascade to form a functional JNK signaling module. JIP2 inhibits IL1 beta-induced apoptosis in insulin-secreting cells. May function as a regulator of vesicle transport, through interactions with the JNK-signaling components and motor proteins. The protein is C-Jun-amino-terminal kinase-interacting protein 2 (MAPK8IP2) of Homo sapiens (Human).